A 229-amino-acid polypeptide reads, in one-letter code: Lipoprotein-releasing system ATP-binding protein LolD (229 aa).

An ABC transporter domain is found at leucine 7 to asparagine 229. Residue glycine 43–serine 50 participates in ATP binding.

The protein belongs to the ABC transporter superfamily. Lipoprotein translocase (TC 3.A.1.125) family. The complex is composed of two ATP-binding proteins (LolD) and two transmembrane proteins (LolC and LolE).

The protein localises to the cell inner membrane. Functionally, part of the ABC transporter complex LolCDE involved in the translocation of mature outer membrane-directed lipoproteins, from the inner membrane to the periplasmic chaperone, LolA. Responsible for the formation of the LolA-lipoprotein complex in an ATP-dependent manner. The sequence is that of Lipoprotein-releasing system ATP-binding protein LolD from Buchnera aphidicola subsp. Schizaphis graminum (strain Sg).